A 232-amino-acid polypeptide reads, in one-letter code: Small ribosomal subunit protein uS3 (232 aa).

The KH type-2 domain maps to 39–107; sequence VRQFLTSELK…PAQINIAEVR (69 aa). The interval 213–232 is disordered; sequence AANAVEPKGDKPKKQRKGRK.

The protein belongs to the universal ribosomal protein uS3 family. In terms of assembly, part of the 30S ribosomal subunit. Forms a tight complex with proteins S10 and S14.

In terms of biological role, binds the lower part of the 30S subunit head. Binds mRNA in the 70S ribosome, positioning it for translation. This Vibrio parahaemolyticus serotype O3:K6 (strain RIMD 2210633) protein is Small ribosomal subunit protein uS3.